The sequence spans 395 residues: Chorismate synthase (395 aa).

2 residues coordinate NADP(+): arginine 40 and arginine 46. Residues proline 99–methionine 120 are disordered. Residues arginine 134–serine 136, glutamine 256–alanine 257, glycine 301, lysine 316–serine 320, and arginine 342 each bind FMN.

It belongs to the chorismate synthase family. In terms of assembly, homotetramer. It depends on FMNH2 as a cofactor.

The catalysed reaction is 5-O-(1-carboxyvinyl)-3-phosphoshikimate = chorismate + phosphate. The protein operates within metabolic intermediate biosynthesis; chorismate biosynthesis; chorismate from D-erythrose 4-phosphate and phosphoenolpyruvate: step 7/7. Its function is as follows. Catalyzes the anti-1,4-elimination of the C-3 phosphate and the C-6 proR hydrogen from 5-enolpyruvylshikimate-3-phosphate (EPSP) to yield chorismate, which is the branch point compound that serves as the starting substrate for the three terminal pathways of aromatic amino acid biosynthesis. This reaction introduces a second double bond into the aromatic ring system. In Bifidobacterium longum (strain DJO10A), this protein is Chorismate synthase.